Here is a 530-residue protein sequence, read N- to C-terminus: TNF receptor-associated factor 6 (530 aa).

Positions 1-362 are interaction with TAX1BP1; it reads MSLLNCENSC…EAQQCNGIYI (362 aa). The RING-type; degenerate zinc finger occupies 70 to 109; the sequence is CPICLMALREAVQTPCGHRFCKACITKSIRDAGHKCPVDN. Residue K124 forms a Glycyl lysine isopeptide (Lys-Gly) (interchain with G-Cter in SUMO); alternate linkage. Residue K124 forms a Glycyl lysine isopeptide (Lys-Gly) (interchain with G-Cter in ubiquitin); alternate linkage. A Glycyl lysine isopeptide (Lys-Gly) (interchain with G-Cter in SUMO) cross-link involves residue K142. 2 TRAF-type zinc fingers span residues 150-202 and 203-259; these read DHQV…EEKE and IHDQ…NHLA. Residues 302–356 adopt a coiled-coil conformation; the sequence is NYEETVKQLEGRLVRQDHQIRELTAKMETQSMHVSELKRTIRSLEDKVAEMEAQQ. K327 participates in a covalent cross-link: Glycyl lysine isopeptide (Lys-Gly) (interchain with G-Cter in ubiquitin). One can recognise an MATH domain in the interval 358 to 507; it reads NGIYIWKIGN…DDTLLVRCEV (150 aa). Residues 363 to 530 form an interaction with TANK region; it reads WKIGNFGMHL…FQPRSTDAGV (168 aa). A Glycyl lysine isopeptide (Lys-Gly) (interchain with G-Cter in SUMO) cross-link involves residue K461.

It belongs to the TNF receptor-associated factor family. A subfamily. As to quaternary structure, homotrimer. Homooligomer. N-terminal region is dimeric while C-terminal region is trimeric; maybe providing a mode of oligomerization. Upon IL1B treatment, forms a complex with PELI1, IRAK1, IRAK4 and MYD88; this complex recruits MAP3K7/TAK1, TAB1 and TAB2 to mediate NF-kappa-B activation. Direct binding of SMAD6 to PELI1 prevents the complex formation and hence negatively regulates IL1R-TLR signaling and eventually NF-kappa-B-mediated gene expression. Binds to TNFRSF5/CD40 and TNFRSF11A/RANK. Associates with NGFR, TNFRSF17, IRAK2, IRAK3, RIPK2, MAP3K1, MAP3K5, MAP3K14, CSK, TRAF, TRAF-interacting protein TRIP and TNF receptor associated protein TDP2. Interacts with IL17R. Interacts with SQSTM1 bridging NTRK1 and NGFR. Forms a ternary complex with SQSTM1 and PRKCZ. Interacts with PELI2 and PELI3. Binds UBE2V1. Interacts with TAX1BP1; this interaction mediates deubiquitination of TRAF6 and inhibition of NF-kappa-B activation. Interacts with ZNF675. Interacts with ARRB1 and ARRB2. Interacts with MAP3K7 and TAB1/MAP3K7IP1; during IL-1 signaling. Interacts with UBE2N. Interacts with TGFBR1, HDAC1 and RANGAP1. Interacts with AKT1, AKT2 and AKT3. Interacts (via TRAF domains) with NUMBL (via C-terminal). Interacts with RBCK1. Interacts with LIMD1 (via LIM domains). Interacts with RSAD2/viperin. Interacts (via C-terminus) with EIF2AK2/PKR (via the kinase catalytic domain). Interacts with ZFAND5. Interacts with IL1RL1. Interacts with TRAFD1. Interacts with AJUBA. Interacts with MAVS/IPS1. Interacts (via TRAF domains) with DYNC2I2 (via WD domains). Interacts with IFIT3 (via N-terminus). Interacts with TICAM2. Interacts with CARD14. Interacts with CD40 and MAP3K8; the interaction is required for ERK activation. Interacts with TICAM1 and this interaction is enhanced in the presence of WDFY1. Interacts with TANK; this interaction increases in response to DNA damage. Interacts with USP10; this interaction increases in response to DNA damage. Interacts with ZC3H12A; this interaction increases in response to DNA damage and is stimulated by TANK. Interacts with WDFY3. Interacts with TRIM13. Interacts with GPS2. Interacts (via C-terminus) with SASH1. Interacts with LRRC19. Interacts with IL17RA and TRAF3IP2. Interacts with TOMM70. Interacts with AMBRA1; interaction is required to mediate 'Lys-63'-linked ubiquitination of ULK1. Interacts with CRBN; this interaction inhibits TLR4-mediated signaling by preventing TRAF6-mediated ubiquitination of ECSIT. In terms of processing, sumoylated on Lys-124, Lys-142 and Lys-461 with SUMO1. Polyubiquitinated on Lys-124 by TRAF3IP2; after cell stimulation with IL17A. Polyubiquitinated; after cell stimulation with IL1B or TGFB. This ligand-induced cell stimulation leads to dimerization/oligomerization of TRAF6 molecules, followed by auto-ubiquitination which involves UBE2N and UBE2V1 and leads to TRAF6 activation. This 'Lys-63' site-specific poly-ubiquitination appears to be associated with the activation of signaling molecules. Endogenous autoubiquitination occurs only for the cytoplasmic form. Deubiquitinated by USP10 in a TANK-dependent manner, leading to the negative regulation of NF-kappa-B signaling upon DNA damage. LRRC19 induces 'Lys-63' ubiquitination. Ubiquitinated at Lys-327 by the SCF(FBXL2) complex, leading to its degradation by the proteasome.

The protein localises to the cytoplasm. It localises to the cell cortex. It is found in the nucleus. Its subcellular location is the lipid droplet. It carries out the reaction S-ubiquitinyl-[E2 ubiquitin-conjugating enzyme]-L-cysteine + [acceptor protein]-L-lysine = [E2 ubiquitin-conjugating enzyme]-L-cysteine + N(6)-ubiquitinyl-[acceptor protein]-L-lysine.. It participates in protein modification; protein ubiquitination. Its function is as follows. E3 ubiquitin ligase that, together with UBE2N and UBE2V1, mediates the synthesis of 'Lys-63'-linked-polyubiquitin chains conjugated to proteins, such as ECSIT, IKBKG, IRAK1, AKT1 and AKT2. Also mediates ubiquitination of free/unanchored polyubiquitin chain that leads to MAP3K7 activation. Leads to the activation of NF-kappa-B and JUN. Seems to also play a role in dendritic cells (DCs) maturation and/or activation. Represses c-Myb-mediated transactivation, in B-lymphocytes. Adapter protein that seems to play a role in signal transduction initiated via TNF receptor, IL-1 receptor and IL-17 receptor. Regulates osteoclast differentiation by mediating the activation of adapter protein complex 1 (AP-1) and NF-kappa-B, in response to RANK-L stimulation. Together with MAP3K8, mediates CD40 signals that activate ERK in B-cells and macrophages, and thus may play a role in the regulation of immunoglobulin production. Acts as a regulator of the JNK and NF-kappa-B signaling pathways by initiating assembly of heterotypic 'Lys-63'-/'Lys-48'-linked branched ubiquitin chains that are then recognized by TAB2: TRAF6 catalyzes initial 'Lys-63'-linked-polyubiquitin chains that are then branched via 'Lys-48'-linked polyubiquitin by HUWE1. 'Lys-63'-/'Lys-48'-linked branched ubiquitin chains protect 'Lys-63'-linkages from CYLD deubiquitination. Also participates in the TCR signaling by ubiquitinating LAT. The protein is TNF receptor-associated factor 6 (Traf6) of Rattus norvegicus (Rat).